Consider the following 244-residue polypeptide: Geranylgeranylglyceryl phosphate synthase (244 aa).

Mg(2+) contacts are provided by D21 and T50. Sn-glycerol 1-phosphate contacts are provided by residues 168 to 174, 200 to 201, and 222 to 223; these read YLEAGSG, GG, and GN.

It belongs to the GGGP/HepGP synthase family. Group II subfamily. It depends on Mg(2+) as a cofactor.

Its subcellular location is the cytoplasm. The enzyme catalyses sn-glycerol 1-phosphate + (2E,6E,10E)-geranylgeranyl diphosphate = sn-3-O-(geranylgeranyl)glycerol 1-phosphate + diphosphate. Its pathway is membrane lipid metabolism; glycerophospholipid metabolism. Prenyltransferase that catalyzes the transfer of the geranylgeranyl moiety of geranylgeranyl diphosphate (GGPP) to the C3 hydroxyl of sn-glycerol-1-phosphate (G1P). This reaction is the first ether-bond-formation step in the biosynthesis of archaeal membrane lipids. In Sulfurisphaera tokodaii (strain DSM 16993 / JCM 10545 / NBRC 100140 / 7) (Sulfolobus tokodaii), this protein is Geranylgeranylglyceryl phosphate synthase.